The primary structure comprises 375 residues: Serine protease 23 (375 aa).

Residues 1–23 form the signal peptide; the sequence is MAGTPGHPIFLLLLLRAIGQVSP. Asn-93 is a glycosylation site (N-linked (GlcNAc...) asparagine). Cys-153 and Cys-169 are disulfide-bonded. His-168 serves as the catalytic Charge relay system. N-linked (GlcNAc...) asparagine glycosylation is present at Asn-199. Residues Asp-232 and Ser-308 each act as charge relay system in the active site.

The protein belongs to the peptidase S1 family.

The protein resides in the secreted. This chain is Serine protease 23 (PRSS23), found in Bos taurus (Bovine).